Reading from the N-terminus, the 1473-residue chain is G8 domain-containing protein DDB_G0286311 (1473 aa).

A signal peptide spans M1–S21. The chain crosses the membrane as a helical span at residues I105 to F125. Residue N126 is glycosylated (N-linked (GlcNAc...) asparagine). Residues T130–L150 traverse the membrane as a helical segment. 3 N-linked (GlcNAc...) asparagine glycosylation sites follow: N203, N241, and N275. Positions T298–T375 are enriched in low complexity. A disordered region spans residues T298–S400. The span at D376–A389 shows a compositional bias: polar residues. Positions S390–S400 are enriched in low complexity. N444, N637, N680, N1078, N1088, N1176, N1206, N1225, N1389, and N1424 each carry an N-linked (GlcNAc...) asparagine glycan. The 129-residue stretch at S626–T754 folds into the G8 domain.

Belongs to the comF family.

Its subcellular location is the membrane. In Dictyostelium discoideum (Social amoeba), this protein is G8 domain-containing protein DDB_G0286311.